We begin with the raw amino-acid sequence, 835 residues long: MGILNKIFGTYSERELRRVNPIVNKIEALDEKMQSLKDEDFKLKTEEFKSRLEKGEKLDDILPEAFALVREAAHRTIGLKHYREQLIGGVVLHQGRIGEMKTGEGKTLVATLPAYVNALTGKGVHIVTVNDYLAKRDRDLMAPVYEFLGLKVGVILHNLNNEERQEAYGSDITYGTNSEFGFDYLRDNMVVYKEERVQRKLNFSIVDEVDSILIDEARTPLIISGQGEKSTEFYKVADYFTKSLIAEKDFTIDEKANSAMLTDEGVNKAENFFKVDNYADAENMEIQHHVVQALKANYVMKKDKDYMIKDGEILIVDEFTGRAMEGRRYSDGLHQAIEAKEGVRVERESKTLATITYQNYFRMYNKLSGMTGTAQTEENEFREIYGLDVIVIPTHEPIARIDNADVVYKSEKGKFKAIVDEIVERYKKGQPMLVGTVSIEKSEMLSSMLKKKGVPHQVLNAKYHEKEAEIISHAGEYGMVTIATNMAGRGTDIKLTKEAEEAGGLMIIGTERHESRRIDNQLRGRSGRQGDPGESRFFVSLEDDLMRIFGSERIQGIVDKLGLAEDEAIESKMVSSAIESAQKKVEGNNFDIRKTLLQYDDVINKQREIIYKQRSEVLEGEDLKDQIRDMIRDVVYTAVNSHISGVEEEFETELQNLVNYLEDICLPKALVKVKDISNLSDEEIKEKLLEAVENIYSRKEKEIGEEQIREIERVILLRVVDTKWMDHIDDMDHLKQGIGLRAYRQQDPVQAYQFEGSEMFEEMIYNIKVDTVRYLFHVEVEKAPEREKVAKETSTNYDEDSVKKQPIKKENRIGRNDMCPCGSGKKYKNCCGRMA.

ATP is bound by residues Q85, 103–107 (GEGKT), and D492. Residues C819, C821, C830, and C831 each coordinate Zn(2+).

This sequence belongs to the SecA family. In terms of assembly, monomer and homodimer. Part of the essential Sec protein translocation apparatus which comprises SecA, SecYEG and auxiliary proteins SecDF. Other proteins may also be involved. It depends on Zn(2+) as a cofactor.

It localises to the cell membrane. The protein resides in the cytoplasm. It catalyses the reaction ATP + H2O + cellular proteinSide 1 = ADP + phosphate + cellular proteinSide 2.. In terms of biological role, part of the Sec protein translocase complex. Interacts with the SecYEG preprotein conducting channel. Has a central role in coupling the hydrolysis of ATP to the transfer of proteins into and across the cell membrane, serving as an ATP-driven molecular motor driving the stepwise translocation of polypeptide chains across the membrane. The polypeptide is Protein translocase subunit SecA (Clostridium botulinum (strain Kyoto / Type A2)).